The primary structure comprises 234 residues: Cytidylate kinase (234 aa).

Position 10–18 (10–18) interacts with ATP; it reads GYSACGKST.

Belongs to the cytidylate kinase family. Type 1 subfamily.

It localises to the cytoplasm. It catalyses the reaction CMP + ATP = CDP + ADP. The catalysed reaction is dCMP + ATP = dCDP + ADP. This chain is Cytidylate kinase, found in Cytophaga hutchinsonii (strain ATCC 33406 / DSM 1761 / CIP 103989 / NBRC 15051 / NCIMB 9469 / D465).